The chain runs to 219 residues: Interleukin-6 (219 aa).

The first 20 residues, 1–20 (MNSSTRYLSLLSALVVLVKG), serve as a signal peptide directing secretion. The cysteines at positions 103 and 111 are disulfide-linked.

Belongs to the IL-6 superfamily. In terms of assembly, component of a hexamer of two molecules each of IL6, IL6R and IL6ST; first binds to IL6R to associate with the signaling subunit IL6ST. In terms of tissue distribution, expressed in spleen, gill and gastrointestinal tract, ovary and brain. Highest expression in ovary.

It is found in the secreted. Cytokine with a wide variety of biological functions in immunity, tissue regeneration, and metabolism. Binds to IL6R, then the complex associates to the signaling subunit IL6ST/gp130 to trigger the intracellular IL6-signaling pathway. The interaction with the membrane-bound IL6R and IL6ST stimulates 'classic signaling', whereas the binding of IL6 and soluble IL6R to IL6ST stimulates 'trans-signaling'. Alternatively, 'cluster signaling' occurs when membrane-bound IL6:IL6R complexes on transmitter cells activate IL6ST receptors on neighboring receiver cells. The chain is Interleukin-6 (il6) from Oncorhynchus mykiss (Rainbow trout).